The following is an 823-amino-acid chain: DNA ligase (823 aa).

NAD(+)-binding positions include 31–35 (DDAFD) and 73–74 (SQ). Lys100 acts as the N6-AMP-lysine intermediate in catalysis. 4 residues coordinate NAD(+): Arg121, Glu163, Lys275, and Lys296. 4 residues coordinate Zn(2+): Cys387, Cys390, Cys403, and Cys408. BRCT domains are found at residues 562–655 (QAES…TGET), 654–742 (ETVH…DAHV), and 741–823 (HVHA…TPGT).

The protein belongs to the NAD-dependent DNA ligase family. LigA subfamily. Mg(2+) is required as a cofactor. The cofactor is Mn(2+).

The catalysed reaction is NAD(+) + (deoxyribonucleotide)n-3'-hydroxyl + 5'-phospho-(deoxyribonucleotide)m = (deoxyribonucleotide)n+m + AMP + beta-nicotinamide D-nucleotide.. In terms of biological role, DNA ligase that catalyzes the formation of phosphodiester linkages between 5'-phosphoryl and 3'-hydroxyl groups in double-stranded DNA using NAD as a coenzyme and as the energy source for the reaction. It is essential for DNA replication and repair of damaged DNA. This Treponema pallidum (strain Nichols) protein is DNA ligase.